Reading from the N-terminus, the 62-residue chain is uncharacterized protein (62 aa).

Helical transmembrane passes span 7 to 27 (LLLL…VFIA) and 34 to 51 (IIAS…GFTL).

It localises to the cell membrane. This is an uncharacterized protein from Bacillus subtilis (strain 168).